We begin with the raw amino-acid sequence, 588 residues long: Thioredoxin domain-containing protein 3 (588 aa).

A Thioredoxin domain is found at 2-119 (ASKKREVQLQ…VINLIDEERK (118 aa)). A disulfide bridge connects residues Cys-39 and Cys-42. 3 NDK regions span residues 157-257 (IAII…DQPE), 315-455 (LEKT…STLG), and 456-588 (LIKP…PEEN). Positions 230-261 (GSKHNPPSEETEPQTDTEPNERSEDQPEVEAQ) are disordered.

The protein in the C-terminal section; belongs to the NDK family. As to quaternary structure, monomer. As to expression, testis-specific. Expressed only in primary spermatocytes and round spermatids.

It is found in the cytoplasm. In terms of biological role, probably required during the final stages of sperm tail maturation in the testis and/or epididymis, where extensive disulfide bonding of fibrous sheath (FS) proteins occurs. In vitro, it has neither nucleoside diphosphate kinase (NDPK) activity nor reducing activity on disulfide bonds. Exhibits a 3'-5' exonuclease activity with a preference for single-stranded DNA, suggesting roles in DNA proofreading and repair. This is Thioredoxin domain-containing protein 3 from Homo sapiens (Human).